The primary structure comprises 117 residues: MDKHTTRLRRARKTRARIADLKMVRLCVFRSNNHIYAQVISAEGDKVLAQASTLEAEVRGSLKSGSNVEAAAIVGKRIAEKAKAAGVEKVAFDRSGFQYHGRVKALAEAARENGLSF.

Belongs to the universal ribosomal protein uL18 family. Part of the 50S ribosomal subunit; part of the 5S rRNA/L5/L18/L25 subcomplex. Contacts the 5S and 23S rRNAs.

Functionally, this is one of the proteins that bind and probably mediate the attachment of the 5S RNA into the large ribosomal subunit, where it forms part of the central protuberance. This chain is Large ribosomal subunit protein uL18, found in Neisseria gonorrhoeae (strain ATCC 700825 / FA 1090).